A 404-amino-acid polypeptide reads, in one-letter code: Probable tRNA sulfurtransferase (404 aa).

Residues 61-166 form the THUMP domain; the sequence is EAVSERLKDV…SGYSYIMCDE (106 aa). Residues 184-185, 209-210, Arg-266, Gly-288, and Gln-297 contribute to the ATP site; these read LL and HF.

This sequence belongs to the ThiI family.

It localises to the cytoplasm. It carries out the reaction [ThiI sulfur-carrier protein]-S-sulfanyl-L-cysteine + a uridine in tRNA + 2 reduced [2Fe-2S]-[ferredoxin] + ATP + H(+) = [ThiI sulfur-carrier protein]-L-cysteine + a 4-thiouridine in tRNA + 2 oxidized [2Fe-2S]-[ferredoxin] + AMP + diphosphate. It catalyses the reaction [ThiS sulfur-carrier protein]-C-terminal Gly-Gly-AMP + S-sulfanyl-L-cysteinyl-[cysteine desulfurase] + AH2 = [ThiS sulfur-carrier protein]-C-terminal-Gly-aminoethanethioate + L-cysteinyl-[cysteine desulfurase] + A + AMP + 2 H(+). The protein operates within cofactor biosynthesis; thiamine diphosphate biosynthesis. In terms of biological role, catalyzes the ATP-dependent transfer of a sulfur to tRNA to produce 4-thiouridine in position 8 of tRNAs, which functions as a near-UV photosensor. Also catalyzes the transfer of sulfur to the sulfur carrier protein ThiS, forming ThiS-thiocarboxylate. This is a step in the synthesis of thiazole, in the thiamine biosynthesis pathway. The sulfur is donated as persulfide by IscS. In Bacillus cereus (strain ATCC 10987 / NRS 248), this protein is Probable tRNA sulfurtransferase.